The primary structure comprises 512 residues: Ascofuranone/ascochlorin biosynthesis clusters transcription regulator (512 aa).

Positions 14–49 (CDRCHSQKLRCPRSVEPEKANPEEPCSRCRKAGVPC) form a DNA-binding region, zn(2)-C6 fungal-type. Disordered regions lie at residues 54–87 (RGKV…PYDI), 118–148 (GSGS…DPLM), and 325–351 (GCTR…DGSI). Residues 56–70 (KVGRPSKATKKKSAR) show a composition bias toward basic residues. Low complexity-rich tracts occupy residues 118-127 (GSGSVTTSAS) and 327-342 (TRSS…GSSM).

Its subcellular location is the nucleus. In terms of biological role, transcription factor that regulates the expression of the asc-1 and asc-2 gene clusters that mediate the biosynthesis of both ascochlorin and ascofuranone, a strong inhibitor of cyanide-insensitive alternative oxidases and a promising drug candidate against African trypanosomiasis. Binds the 5'-CGGYGNNTTW-3' motif within promoters of the target genes. This is Ascofuranone/ascochlorin biosynthesis clusters transcription regulator from Acremonium egyptiacum (Oospora egyptiaca).